The following is a 295-amino-acid chain: Trimeric intracellular cation channel type A (295 aa).

The Lumenal portion of the chain corresponds to 1–11 (MELLSALSLDD). The helical transmembrane segment at 12–32 (LAVAFSKLPVFPLFDVAYYII) threads the bilayer. The Cytoplasmic portion of the chain corresponds to 33–51 (SILYLKYEPGAVDLSKRSP). Residues 52–72 (VASWLCAMLYCFGSYILADVL) traverse the membrane as a helical segment. Residues 73 to 84 (LGESPIHYFSNN) are Lumenal-facing. Gly-74 lines the Ca(2+) pocket. Residues 85 to 105 (ANILLASAVWYLTFFCPLNIF) traverse the membrane as a helical segment. Topologically, residues 106 to 144 (YKIVSFLPLKLVLVGMKEVVRVRKIAMGIHHAHHHYHHG) are cytoplasmic. A 1,2-diacyl-sn-glycero-3-phospho-(1D-myo-inositol-4,5-bisphosphate) contacts are provided by Lys-122 and Arg-126. A helical transmembrane segment spans residues 145-165 (WVIMVLIGWVKGSGVALMSNL). Topologically, residues 166-178 (EQLLRGVWKPETN) are lumenal. A helical membrane pass occupies residues 179–199 (EILHMSFPTKASLYGAILFTL). Topologically, residues 200-201 (QQ) are cytoplasmic. A helical membrane pass occupies residues 202–222 (AHWLPISKAYLIFFFTLFMAI). The Lumenal portion of the chain corresponds to 223–233 (CKIYMTATHSH). The helical transmembrane segment at 234–254 (GSPFAIFESGICCVLFGAANG) threads the bilayer. Residues 255 to 295 (DHDDHGDHHHHHDDHDVSHSTVKSKEELNEGTRKRKTKKAE) lie on the Cytoplasmic side of the membrane. Residues 259 to 286 (HGDHHHHHDDHDVSHSTVKSKEELNEGT) are compositionally biased toward basic and acidic residues. Positions 259–295 (HGDHHHHHDDHDVSHSTVKSKEELNEGTRKRKTKKAE) are disordered.

It belongs to the TMEM38 family. As to quaternary structure, homotrimer; conformation seems to be controled by binding to diacylglycerol (DAG).

The protein resides in the sarcoplasmic reticulum membrane. It localises to the nucleus membrane. The enzyme catalyses K(+)(in) = K(+)(out). Channel activity is activated by a change of voltage within the sarcoplasmic reticulum lumen and blocked by luminal high Ca(2+) levels. Functionally, intracellular monovalent cation channel required for maintenance of rapid intracellular calcium release. Acts as a potassium counter-ion channel that functions in synchronization with calcium release from intracellular stores. Opened by a change of voltage within the sarcoplasmic reticulum lumen. The sequence is that of Trimeric intracellular cation channel type A (tmem38a) from Xenopus tropicalis (Western clawed frog).